Here is a 1278-residue protein sequence, read N- to C-terminus: ABC transporter B family member 11 (1278 aa).

2 stretches are compositionally biased toward basic and acidic residues: residues 1-13 (MNGD…DSVS) and 21-35 (SPKE…EKSE). A disordered region spans residues 1-35 (MNGDGAREGDSVSHEPSTSKSPKEGEETKKEEKSE). Helical transmembrane passes span 55-75 (VLLM…LPFM), 106-126 (FVYL…CWMI), 182-202 (FIQL…KGWL), 205-225 (LVML…ALIV), 285-305 (GLGL…AIWF), and 314-334 (GYTG…SMSL). One can recognise an ABC transmembrane type-1 1 domain in the interval 58-346 (MICGSIGAIG…TSPCVTAFAA (289 aa)). The ABC transporter 1 domain maps to 381-617 (IELKDVHFSY…SEGAYSQLIR (237 aa)). Position 416–423 (416–423 (GESGSGKS)) interacts with ATP. Asparagine 483, asparagine 568, and asparagine 653 each carry an N-linked (GlcNAc...) asparagine glycan. The segment covering 629 to 654 (ELSSGSSFRNSNLKKSMEGTSSVGNS) has biased composition (polar residues). The disordered stretch occupies residues 629-656 (ELSSGSSFRNSNLKKSMEGTSSVGNSSR). Positions 710 to 997 (LLLGTVAAAI…SSTFAPDSSK (288 aa)) constitute an ABC transmembrane type-1 2 domain. A run of 2 helical transmembrane segments spans residues 711-731 (LLGT…GILI) and 751-771 (FWAI…PTQM). N-linked (GlcNAc...) asparagine glycosylation occurs at asparagine 806. 4 helical membrane passes run 824–844 (ALVG…ASGL), 845–865 (IIAF…LPLI), 932–952 (GFIS…VYAT), and 971–991 (VFQV…SSTF). One can recognise an ABC transporter 2 domain in the interval 1032-1271 (IELRHLSFTY…EGGVYASLVQ (240 aa)). 1067–1074 (GESGSGKS) serves as a coordination point for ATP. 2 N-linked (GlcNAc...) asparagine glycosylation sites follow: asparagine 1121 and asparagine 1222.

It belongs to the ABC transporter superfamily. ABCB family. Multidrug resistance exporter (TC 3.A.1.201) subfamily. In terms of tissue distribution, present in roots and flower buds.

The protein localises to the membrane. The catalysed reaction is (indol-3-yl)acetate(in) + ATP + H2O = (indol-3-yl)acetate(out) + ADP + phosphate + H(+). Its function is as follows. Involved in the regulation of auxin transport required for pistil elongation. This chain is ABC transporter B family member 11, found in Arabidopsis thaliana (Mouse-ear cress).